Consider the following 490-residue polypeptide: MDPILVLVLTLSCLFLLSLWRQSYERGKLPPGPTPLPIIGNILQIDVKDICQSFTNLSRVYGPVYTLYLGRKPTVVLHGYEAVKEALVDHGDVFAGRGRLPVFDKATNGMGIGFSNGSVWKNTRHFSLMTLRNLGMGKRSIEDRVQEEARCLVEELRKTNGSPCDPTFILGCAPCNVICSIIFQDRFDYKDRDFLNLLEKLDEISKILSTPWLQVCNTFPALLDYCPGSHNQFFKNYAYIKNFLLEKIREHKESLDVTIPRDFIDYFLIKGAQEDDNHPLKNNFEHLAITVTDLFIGGTESMSTTLRYALLLLLKYPHVTAKVQEEIEHVIGKHRRPCMQDRSHMPYTNAMIHEVQRFIDLVPNNLPHEVTCDIKFRNYFIPKGTTVITSLSSVLRDSKEFPNPEKFDPGHFLDENGKFKKSDYFMPFSTGKRICAGEGLARMELFLFLTSILQNFNLKPLVHPKDIDITPMLIGLGSVPPAFQLCFIPS.

Ser127 is subject to Phosphoserine. N6-acetyllysine is present on residues Lys252 and Lys375. Cys435 contributes to the heme binding site.

This sequence belongs to the cytochrome P450 family. The cofactor is heme. Expressed in liver.

The protein localises to the endoplasmic reticulum membrane. It is found in the microsome membrane. It catalyses the reaction an organic molecule + reduced [NADPH--hemoprotein reductase] + O2 = an alcohol + oxidized [NADPH--hemoprotein reductase] + H2O + H(+). Metabolizes arachidonic acid mainly to 12-hydroxyeicosatetraenoic acid (HETE). This Mus musculus (Mouse) protein is Cytochrome P450 2C54.